The primary structure comprises 705 residues: Elongation factor G (705 aa).

The tr-type G domain maps to 8-290 (ERYRNFGIMA…GVVHLLPSPA (283 aa)). Residues 17-24 (AHIDAGKT), 88-92 (DTPGH), and 142-145 (NKMD) each bind GTP. Positions 290–309 (ADRPPVQGIDEDEKEDTRAA) are disordered.

The protein belongs to the TRAFAC class translation factor GTPase superfamily. Classic translation factor GTPase family. EF-G/EF-2 subfamily.

It is found in the cytoplasm. Its function is as follows. Catalyzes the GTP-dependent ribosomal translocation step during translation elongation. During this step, the ribosome changes from the pre-translocational (PRE) to the post-translocational (POST) state as the newly formed A-site-bound peptidyl-tRNA and P-site-bound deacylated tRNA move to the P and E sites, respectively. Catalyzes the coordinated movement of the two tRNA molecules, the mRNA and conformational changes in the ribosome. The chain is Elongation factor G from Xanthomonas axonopodis pv. citri (strain 306).